Reading from the N-terminus, the 79-residue chain is Putative defensin-like protein 29 (79 aa).

Residues methionine 1–alanine 26 form the signal peptide. 3 disulfide bridges follow: cysteine 45–cysteine 65, cysteine 51–cysteine 74, and cysteine 55–cysteine 76.

It belongs to the DEFL family.

It localises to the secreted. The polypeptide is Putative defensin-like protein 29 (Arabidopsis thaliana (Mouse-ear cress)).